A 230-amino-acid polypeptide reads, in one-letter code: RING finger protein 141 (230 aa).

The N-myristoyl glycine moiety is linked to residue Gly2. The RING-type zinc finger occupies 155–192 (CCICMDGRADLILPCAHSFCQKCIDKWSDRHRNCPICR).

The protein resides in the membrane. May be involved in spermatogenesis. This chain is RING finger protein 141 (RNF141), found in Bos taurus (Bovine).